A 424-amino-acid chain; its full sequence is Histidine--tRNA ligase (424 aa).

The protein belongs to the class-II aminoacyl-tRNA synthetase family. Homodimer.

It is found in the cytoplasm. The catalysed reaction is tRNA(His) + L-histidine + ATP = L-histidyl-tRNA(His) + AMP + diphosphate + H(+). The sequence is that of Histidine--tRNA ligase from Shigella boydii serotype 18 (strain CDC 3083-94 / BS512).